The chain runs to 44 residues: uncharacterized protein (44 aa).

This is an uncharacterized protein from Bacillus subtilis (strain 168).